Reading from the N-terminus, the 201-residue chain is CMRF35-like molecule 7 (201 aa).

The first 17 residues, 1 to 17, serve as a signal peptide directing secretion; it reads MWLPPALLLLSLSGCFS. An Ig-like V-type domain is found at 18–120; sequence IQGPESVRAP…PDLGTQVKVI (103 aa). Topologically, residues 18 to 151 are extracellular; that stretch reads IQGPESVRAP…FIGSHKRNHY (134 aa). C36 and C104 are oxidised to a cystine. Residues 152–172 form a helical membrane-spanning segment; that stretch reads MLLVFVKVPILLILVTAILWL. Topologically, residues 173 to 201 are cytoplasmic; it reads KGSQRVPEEPGEQPIYMNFSEPLTKDMAT. The residue at position 188 (Y188) is a Phosphotyrosine; by FYN.

Belongs to the CD300 family. In terms of assembly, interacts with TYROBP, which enhances cell surface expression and activation properties. Interacts with GRB2 in the presence of FYN. In terms of processing, phosphorylation on Tyr-188 by FYN is required for interaction with GRB2. As to expression, expressed exclusively in myeloid lineages.

Its subcellular location is the cell membrane. Its function is as follows. Acts as an activating immune receptor through its interaction with ITAM-bearing adapter TYROBP, and also independently by recruitment of GRB2. This is CMRF35-like molecule 7 (CD300LB) from Homo sapiens (Human).